A 143-amino-acid chain; its full sequence is MELNGIKPSLGAKHAKRRVGRGIGSGLGKTAGRGHKGQKSRAGGYHKVGFEGGQMPMQRRLPKRGFKSHLLKFNAEVTLSALEQLGLAEVDLLALKTAGLVGQLAKNVKVIKSGELSKAVKLNGISATAGAKAIIEAAGGSVA.

The segment at 1–59 (MELNGIKPSLGAKHAKRRVGRGIGSGLGKTAGRGHKGQKSRAGGYHKVGFEGGQMPMQR) is disordered. Gly residues predominate over residues 21–31 (RGIGSGLGKTA).

The protein belongs to the universal ribosomal protein uL15 family. Part of the 50S ribosomal subunit.

Its function is as follows. Binds to the 23S rRNA. The polypeptide is Large ribosomal subunit protein uL15 (Polaromonas sp. (strain JS666 / ATCC BAA-500)).